The chain runs to 544 residues: Chaperonin GroEL (544 aa).

ATP-binding positions include 30 to 33 (TLGP), K51, 87 to 91 (DGTTT), G415, and D495.

Belongs to the chaperonin (HSP60) family. In terms of assembly, forms a cylinder of 14 subunits composed of two heptameric rings stacked back-to-back. Interacts with the co-chaperonin GroES.

It localises to the cytoplasm. The enzyme catalyses ATP + H2O + a folded polypeptide = ADP + phosphate + an unfolded polypeptide.. Functionally, together with its co-chaperonin GroES, plays an essential role in assisting protein folding. The GroEL-GroES system forms a nano-cage that allows encapsulation of the non-native substrate proteins and provides a physical environment optimized to promote and accelerate protein folding. The chain is Chaperonin GroEL from Bartonella bacilliformis (strain ATCC 35685 / KC583 / Herrer 020/F12,63).